The chain runs to 102 residues: Co-chaperonin GroES (102 aa).

It belongs to the GroES chaperonin family. As to quaternary structure, heptamer of 7 subunits arranged in a ring. Interacts with the chaperonin GroEL.

The protein localises to the cytoplasm. In terms of biological role, together with the chaperonin GroEL, plays an essential role in assisting protein folding. The GroEL-GroES system forms a nano-cage that allows encapsulation of the non-native substrate proteins and provides a physical environment optimized to promote and accelerate protein folding. GroES binds to the apical surface of the GroEL ring, thereby capping the opening of the GroEL channel. In Anabaena sp. (strain L31), this protein is Co-chaperonin GroES.